The sequence spans 312 residues: HPr kinase/phosphorylase (312 aa).

Residues His-139 and Lys-160 contribute to the active site. 154 to 161 (GSSGVGKS) contributes to the ATP binding site. Position 161 (Ser-161) interacts with Mg(2+). The Proton acceptor; for phosphorylation activity. Proton donor; for dephosphorylation activity role is filled by Asp-178. The tract at residues 202 to 211 (LEIRGLGIIN) is important for the catalytic mechanism of both phosphorylation and dephosphorylation. Residue Glu-203 participates in Mg(2+) binding. Residue Arg-244 is part of the active site. The tract at residues 265–270 (PVRPGR) is important for the catalytic mechanism of dephosphorylation.

It belongs to the HPrK/P family. Homohexamer. The cofactor is Mg(2+).

It carries out the reaction [HPr protein]-L-serine + ATP = [HPr protein]-O-phospho-L-serine + ADP + H(+). The catalysed reaction is [HPr protein]-O-phospho-L-serine + phosphate + H(+) = [HPr protein]-L-serine + diphosphate. Its function is as follows. Catalyzes the ATP- as well as the pyrophosphate-dependent phosphorylation of a specific serine residue in HPr, a phosphocarrier protein of the phosphoenolpyruvate-dependent sugar phosphotransferase system (PTS). HprK/P also catalyzes the pyrophosphate-producing, inorganic phosphate-dependent dephosphorylation (phosphorolysis) of seryl-phosphorylated HPr (P-Ser-HPr). The two antagonistic activities of HprK/P are regulated by several intracellular metabolites, which change their concentration in response to the absence or presence of rapidly metabolisable carbon sources (glucose, fructose, etc.) in the growth medium. Therefore, by controlling the phosphorylation state of HPr, HPrK/P is a sensor enzyme that plays a major role in the regulation of carbon metabolism and sugar transport: it mediates carbon catabolite repression (CCR), and regulates PTS-catalyzed carbohydrate uptake and inducer exclusion. The protein is HPr kinase/phosphorylase of Listeria monocytogenes serotype 4b (strain CLIP80459).